Here is a 220-residue protein sequence, read N- to C-terminus: A-type ATP synthase subunit K (220 aa).

The next 6 membrane-spanning stretches (helical) occupy residues 5 to 25 (LILGAVGAGLAVGIAGLGSGI), 63 to 83 (FLVAILILFVFKTVSPWAMFA), 90 to 110 (LAGLSAIGQGIAASAGLGAVA), 125 to 145 (LPETQAIYGLLIAILLLVGVF), 155 to 175 (AALGAGFAVGFAGLSGIGQGI), and 195 to 215 (LVLAVMPETFAIFGLLIAILI).

The protein belongs to the V-ATPase proteolipid subunit family. In terms of assembly, the A-type ATPase is composed of subunits A(3), B(3), C, D, E(1 or 2), F, H(2), I and K(x). Subunit K dimerizes and may form higher oligomers.

It is found in the cell membrane. In terms of biological role, component of the A-type ATP synthase that produces ATP from ADP in the presence of a proton gradient across the membrane. The chain is A-type ATP synthase subunit K from Methanocaldococcus jannaschii (strain ATCC 43067 / DSM 2661 / JAL-1 / JCM 10045 / NBRC 100440) (Methanococcus jannaschii).